Here is a 208-residue protein sequence, read N- to C-terminus: Small ribosomal subunit protein uS4 (208 aa).

The S4 RNA-binding domain occupies 98 to 158 (GRLDNVVYRM…EKSKKQARIK (61 aa)).

This sequence belongs to the universal ribosomal protein uS4 family. In terms of assembly, part of the 30S ribosomal subunit. Contacts protein S5. The interaction surface between S4 and S5 is involved in control of translational fidelity.

One of the primary rRNA binding proteins, it binds directly to 16S rRNA where it nucleates assembly of the body of the 30S subunit. In terms of biological role, with S5 and S12 plays an important role in translational accuracy. The polypeptide is Small ribosomal subunit protein uS4 (Haemophilus ducreyi (strain 35000HP / ATCC 700724)).